Reading from the N-terminus, the 104-residue chain is L-rhamnose mutarotase (104 aa).

Substrate is bound at residue Tyr18. The active-site Proton donor is His22. Residues Tyr41 and 76-77 (WW) contribute to the substrate site.

This sequence belongs to the rhamnose mutarotase family. As to quaternary structure, homodimer.

The protein localises to the cytoplasm. It catalyses the reaction alpha-L-rhamnose = beta-L-rhamnose. It participates in carbohydrate metabolism; L-rhamnose metabolism. In terms of biological role, involved in the anomeric conversion of L-rhamnose. The protein is L-rhamnose mutarotase of Salmonella heidelberg (strain SL476).